The following is a 144-amino-acid chain: Putative pre-16S rRNA nuclease (144 aa).

The protein belongs to the YqgF nuclease family.

Its subcellular location is the cytoplasm. In terms of biological role, could be a nuclease involved in processing of the 5'-end of pre-16S rRNA. The sequence is that of Putative pre-16S rRNA nuclease from Prochlorococcus marinus (strain NATL1A).